The following is a 343-amino-acid chain: Cytoplasmic tRNA 2-thiolation protein 1 (343 aa).

Belongs to the TtcA family. CTU1/NCS6/ATPBD3 subfamily.

The protein localises to the cytoplasm. The protein operates within tRNA modification; 5-methoxycarbonylmethyl-2-thiouridine-tRNA biosynthesis. In terms of biological role, plays a central role in 2-thiolation of mcm(5)S(2)U at tRNA wobble positions of tRNA(Lys), tRNA(Glu) and tRNA(Gln). Directly binds tRNAs and probably acts by catalyzing adenylation of tRNAs, an intermediate required for 2-thiolation. It is unclear whether it acts as a sulfurtransferase that transfers sulfur from thiocarboxylated URM1 onto the uridine of tRNAs at wobble position. This Drosophila yakuba (Fruit fly) protein is Cytoplasmic tRNA 2-thiolation protein 1.